The sequence spans 278 residues: Protein NIF3 homolog (278 aa).

The protein belongs to the GTP cyclohydrolase I type 2/NIF3 family.

The protein is Protein NIF3 homolog of Schizosaccharomyces pombe (strain 972 / ATCC 24843) (Fission yeast).